We begin with the raw amino-acid sequence, 258 residues long: Coiled-coil domain-containing protein 127 (258 aa).

The stretch at 50–170 forms a coiled coil; that stretch reads KEIEKEKEAC…EEALAERQSI (121 aa).

This chain is Coiled-coil domain-containing protein 127 (CCDC127), found in Sus scrofa (Pig).